A 93-amino-acid chain; its full sequence is Co-chaperonin GroES (93 aa).

Belongs to the GroES chaperonin family. In terms of assembly, heptamer of 7 subunits arranged in a ring. Interacts with the chaperonin GroEL.

It is found in the cytoplasm. Functionally, together with the chaperonin GroEL, plays an essential role in assisting protein folding. The GroEL-GroES system forms a nano-cage that allows encapsulation of the non-native substrate proteins and provides a physical environment optimized to promote and accelerate protein folding. GroES binds to the apical surface of the GroEL ring, thereby capping the opening of the GroEL channel. This Lacticaseibacillus paracasei (strain ATCC 334 / BCRC 17002 / CCUG 31169 / CIP 107868 / KCTC 3260 / NRRL B-441) (Lactobacillus paracasei) protein is Co-chaperonin GroES.